The following is a 514-amino-acid chain: 2,3-bisphosphoglycerate-independent phosphoglycerate mutase (514 aa).

Mn(2+) is bound by residues Asp-14 and Ser-64. Residue Ser-64 is the Phosphoserine intermediate of the active site. Residues His-125, 155-156 (RD), Arg-187, Arg-193, 263-266 (RADR), and Lys-336 each bind substrate. The Mn(2+) site is built by Asp-403, His-407, Asp-444, His-445, and His-463.

This sequence belongs to the BPG-independent phosphoglycerate mutase family. In terms of assembly, monomer. Mn(2+) is required as a cofactor.

It carries out the reaction (2R)-2-phosphoglycerate = (2R)-3-phosphoglycerate. It functions in the pathway carbohydrate degradation; glycolysis; pyruvate from D-glyceraldehyde 3-phosphate: step 3/5. Functionally, catalyzes the interconversion of 2-phosphoglycerate and 3-phosphoglycerate. The chain is 2,3-bisphosphoglycerate-independent phosphoglycerate mutase from Salmonella typhi.